The following is a 74-amino-acid chain: DNA-directed RNA polymerase subunit omega (74 aa).

This sequence belongs to the RNA polymerase subunit omega family. The RNAP catalytic core consists of 2 alpha, 1 beta, 1 beta' and 1 omega subunit. When a sigma factor is associated with the core the holoenzyme is formed, which can initiate transcription.

It catalyses the reaction RNA(n) + a ribonucleoside 5'-triphosphate = RNA(n+1) + diphosphate. In terms of biological role, promotes RNA polymerase assembly. Latches the N- and C-terminal regions of the beta' subunit thereby facilitating its interaction with the beta and alpha subunits. This Hydrogenovibrio crunogenus (strain DSM 25203 / XCL-2) (Thiomicrospira crunogena) protein is DNA-directed RNA polymerase subunit omega.